The following is a 492-amino-acid chain: NADH-quinone oxidoreductase subunit N (492 aa).

Helical transmembrane passes span 13-33, 43-63, 82-102, 110-132, 136-155, 169-189, 210-230, 245-265, 272-292, 306-326, 331-351, 377-397, 410-430, and 457-477; these read MLPV…GFWL, ILFV…APWA, AALL…LVSL, VSFA…IAFS, IVML…LATL, FLLG…LYGA, IGIL…KIAL, PTLV…AGML, LAAG…TLVI, LLAY…LGDT, AALG…LAVV, AVAL…AGFF, GYLL…VYYL, and VAVA…NLWY.

This sequence belongs to the complex I subunit 2 family. In terms of assembly, NDH-1 is composed of 15 different subunits. Subunits NuoA, H, J, K, L, M, N constitute the membrane sector of the complex.

It is found in the cell membrane. It carries out the reaction a quinone + NADH + 5 H(+)(in) = a quinol + NAD(+) + 4 H(+)(out). Its function is as follows. NDH-1 shuttles electrons from NADH, via FMN and iron-sulfur (Fe-S) centers, to quinones in the respiratory chain. The immediate electron acceptor for the enzyme in this species is believed to be a menaquinone. Couples the redox reaction to proton translocation (for every two electrons transferred, four hydrogen ions are translocated across the cytoplasmic membrane), and thus conserves the redox energy in a proton gradient. This is NADH-quinone oxidoreductase subunit N from Deinococcus radiodurans (strain ATCC 13939 / DSM 20539 / JCM 16871 / CCUG 27074 / LMG 4051 / NBRC 15346 / NCIMB 9279 / VKM B-1422 / R1).